Here is a 393-residue protein sequence, read N- to C-terminus: Arrestin-C (393 aa).

The segment covering F371–A386 has biased composition (basic and acidic residues). The segment at F371–S393 is disordered.

The protein belongs to the arrestin family. In terms of assembly, homodimer; disulfide-linked in response to retinal illumination. Interacts with CXCR4; the interaction is dependent on the C-terminal phosphorylation of CXCR4 and modulates the calcium ion mobilization activity of CXCR4.

The protein resides in the photoreceptor inner segment. The protein localises to the cell projection. It is found in the cilium. It localises to the photoreceptor outer segment. Its function is as follows. May play a role in an as yet undefined retina-specific signal transduction. Could bind to photoactivated-phosphorylated red/green opsins. This chain is Arrestin-C (ARR3), found in Ictidomys tridecemlineatus (Thirteen-lined ground squirrel).